The primary structure comprises 427 residues: Adenylosuccinate synthetase (427 aa).

GTP-binding positions include 12 to 18 and 40 to 42; these read GDEGKGK and GHT. Residue Asp-13 is the Proton acceptor of the active site. Mg(2+)-binding residues include Asp-13 and Gly-40. IMP-binding positions include 13 to 16, 38 to 41, Thr-128, Arg-142, Gln-223, Thr-238, and Arg-302; these read DEGK and NAGH. His-41 (proton donor) is an active-site residue. Substrate is bound at residue 298-304; that stretch reads VTTGRDR. GTP-binding positions include Arg-304, 330-332, and 412-414; these read KLD and GVG.

Belongs to the adenylosuccinate synthetase family. As to quaternary structure, homodimer. Mg(2+) serves as cofactor.

Its subcellular location is the cytoplasm. The catalysed reaction is IMP + L-aspartate + GTP = N(6)-(1,2-dicarboxyethyl)-AMP + GDP + phosphate + 2 H(+). It participates in purine metabolism; AMP biosynthesis via de novo pathway; AMP from IMP: step 1/2. Its function is as follows. Plays an important role in the de novo pathway of purine nucleotide biosynthesis. Catalyzes the first committed step in the biosynthesis of AMP from IMP. This Streptomyces coelicolor (strain ATCC BAA-471 / A3(2) / M145) protein is Adenylosuccinate synthetase.